Reading from the N-terminus, the 525-residue chain is Probable pectinesterase/pectinesterase inhibitor 44 (525 aa).

The N-terminal stretch at 1–19 (MSCLKYFLILLMLGLCVSS) is a signal peptide. Residues 30–153 (VPASEFVSSI…YSMLRELLPL (124 aa)) form a pectinesterase inhibitor 44 region. A glycan (N-linked (GlcNAc...) asparagine) is linked at asparagine 98. A disordered region spans residues 157–192 (EQKPKAVSKPGPIAKGPKAPPGRKLRDTDEDESLQF). A pectinesterase 44 region spans residues 212-509 (DVSVALDGTG…FTVSQFIKGN (298 aa)). Asparagine 222 and asparagine 278 each carry an N-linked (GlcNAc...) asparagine glycan. Substrate-binding residues include threonine 287 and glutamine 317. Aspartate 340 serves as the catalytic Proton donor; for pectinesterase activity. A disulfide bond links cysteine 354 and cysteine 374. Residue aspartate 361 is the Nucleophile; for pectinesterase activity of the active site. 2 N-linked (GlcNAc...) asparagine glycosylation sites follow: asparagine 409 and asparagine 421. Residues arginine 429 and tryptophan 431 each contribute to the substrate site. 3 N-linked (GlcNAc...) asparagine glycosylation sites follow: asparagine 443, asparagine 492, and asparagine 499.

In the N-terminal section; belongs to the PMEI family. The protein in the C-terminal section; belongs to the pectinesterase family. Expressed in siliques.

It localises to the secreted. Its subcellular location is the cell wall. It carries out the reaction [(1-&gt;4)-alpha-D-galacturonosyl methyl ester](n) + n H2O = [(1-&gt;4)-alpha-D-galacturonosyl](n) + n methanol + n H(+). It functions in the pathway glycan metabolism; pectin degradation; 2-dehydro-3-deoxy-D-gluconate from pectin: step 1/5. Its function is as follows. Acts in the modification of cell walls via demethylesterification of cell wall pectin. In Arabidopsis thaliana (Mouse-ear cress), this protein is Probable pectinesterase/pectinesterase inhibitor 44 (PME44).